We begin with the raw amino-acid sequence, 307 residues long: Coproporphyrin III ferrochelatase (307 aa).

Fe-coproporphyrin III-binding positions include Y12, R29, R45–Y46, S53, and Y124. H181 and E263 together coordinate Fe(2+).

This sequence belongs to the ferrochelatase family.

It is found in the cytoplasm. The catalysed reaction is Fe-coproporphyrin III + 2 H(+) = coproporphyrin III + Fe(2+). Its pathway is porphyrin-containing compound metabolism; protoheme biosynthesis. Involved in coproporphyrin-dependent heme b biosynthesis. Catalyzes the insertion of ferrous iron into coproporphyrin III to form Fe-coproporphyrin III. The protein is Coproporphyrin III ferrochelatase of Staphylococcus epidermidis (strain ATCC 35984 / DSM 28319 / BCRC 17069 / CCUG 31568 / BM 3577 / RP62A).